The primary structure comprises 354 residues: Uroporphyrinogen decarboxylase (354 aa).

Residues 27–31 (RQAGR), D77, Y154, T209, and H327 each bind substrate.

This sequence belongs to the uroporphyrinogen decarboxylase family. In terms of assembly, homodimer.

It localises to the cytoplasm. It carries out the reaction uroporphyrinogen III + 4 H(+) = coproporphyrinogen III + 4 CO2. It functions in the pathway porphyrin-containing compound metabolism; protoporphyrin-IX biosynthesis; coproporphyrinogen-III from 5-aminolevulinate: step 4/4. Catalyzes the decarboxylation of four acetate groups of uroporphyrinogen-III to yield coproporphyrinogen-III. This chain is Uroporphyrinogen decarboxylase, found in Actinobacillus pleuropneumoniae serotype 5b (strain L20).